Reading from the N-terminus, the 319-residue chain is Acetyl-coenzyme A carboxylase carboxyl transferase subunit alpha (319 aa).

The 255-residue stretch at 38–292 folds into the CoA carboxyltransferase C-terminal domain; that stretch reads ALDKKAETLL…GKAIEMMLKE (255 aa).

It belongs to the AccA family. Acetyl-CoA carboxylase is a heterohexamer composed of biotin carboxyl carrier protein (AccB), biotin carboxylase (AccC) and two subunits each of ACCase subunit alpha (AccA) and ACCase subunit beta (AccD).

The protein localises to the cytoplasm. The enzyme catalyses N(6)-carboxybiotinyl-L-lysyl-[protein] + acetyl-CoA = N(6)-biotinyl-L-lysyl-[protein] + malonyl-CoA. It participates in lipid metabolism; malonyl-CoA biosynthesis; malonyl-CoA from acetyl-CoA: step 1/1. In terms of biological role, component of the acetyl coenzyme A carboxylase (ACC) complex. First, biotin carboxylase catalyzes the carboxylation of biotin on its carrier protein (BCCP) and then the CO(2) group is transferred by the carboxyltransferase to acetyl-CoA to form malonyl-CoA. This Cereibacter sphaeroides (strain ATCC 17029 / ATH 2.4.9) (Rhodobacter sphaeroides) protein is Acetyl-coenzyme A carboxylase carboxyl transferase subunit alpha.